A 158-amino-acid chain; its full sequence is MKISLSLQQDFQSPELELKRAQLKKIIETTLRHVGYKEDCEIGIACVDLEESHQLNLQYREKDKPTNALSFPSDIPEEVLPMLDALPLGDLVICIPVVLQEALEQKKTAQNHFAHLLVHGVLHLLGYDHETSDEDAEEMEGLEIEILAKLNIANPYQE.

Zn(2+)-binding residues include histidine 119, histidine 123, and histidine 129.

It belongs to the endoribonuclease YbeY family. The cofactor is Zn(2+).

It is found in the cytoplasm. In terms of biological role, single strand-specific metallo-endoribonuclease involved in late-stage 70S ribosome quality control and in maturation of the 3' terminus of the 16S rRNA. This is Endoribonuclease YbeY from Acinetobacter baumannii (strain SDF).